The following is a 171-amino-acid chain: Lipoprotein signal peptidase (171 aa).

3 consecutive transmembrane segments (helical) span residues 12 to 32 (WYWVAVLVFFADQLSKQWVLA), 67 to 87 (WQRWLFTIVAVGFSTLLTVWL), and 93 to 113 (SLLKLNLAYTLVIGGALGNLV). Active-site residues include Asp-123 and Asp-141. The helical transmembrane segment at 137 to 157 (FNIADSAICIGAVLIIWDAFL) threads the bilayer.

This sequence belongs to the peptidase A8 family.

It localises to the cell inner membrane. The catalysed reaction is Release of signal peptides from bacterial membrane prolipoproteins. Hydrolyzes -Xaa-Yaa-Zaa-|-(S,diacylglyceryl)Cys-, in which Xaa is hydrophobic (preferably Leu), and Yaa (Ala or Ser) and Zaa (Gly or Ala) have small, neutral side chains.. Its pathway is protein modification; lipoprotein biosynthesis (signal peptide cleavage). This protein specifically catalyzes the removal of signal peptides from prolipoproteins. The protein is Lipoprotein signal peptidase of Shewanella baltica (strain OS195).